Reading from the N-terminus, the 156-residue chain is Aspartate carbamoyltransferase regulatory chain (156 aa).

The Zn(2+) site is built by C109, C114, C140, and C143.

It belongs to the PyrI family. As to quaternary structure, contains catalytic and regulatory chains. Zn(2+) is required as a cofactor.

Involved in allosteric regulation of aspartate carbamoyltransferase. This Methanosarcina acetivorans (strain ATCC 35395 / DSM 2834 / JCM 12185 / C2A) protein is Aspartate carbamoyltransferase regulatory chain.